We begin with the raw amino-acid sequence, 83 residues long: MGRTKKVRSAGRFGPRYGLRVRRTWLEIEAVQRQKYVCKKCGKKAVKRSGTGIWECRHCGYKFAGGCYQPVTPGGKIVEKSVG.

Positions 38, 41, 56, and 59 each coordinate Zn(2+). Residues 38-59 form a C4-type zinc finger; sequence CKKCGKKAVKRSGTGIWECRHC.

It belongs to the eukaryotic ribosomal protein eL43 family. Putative zinc-binding subfamily. Part of the 50S ribosomal subunit. The cofactor is Zn(2+).

Its function is as follows. Binds to the 23S rRNA. The chain is Large ribosomal subunit protein eL43 from Archaeoglobus fulgidus (strain ATCC 49558 / DSM 4304 / JCM 9628 / NBRC 100126 / VC-16).